Reading from the N-terminus, the 99-residue chain is Sperm protein associated with the nucleus on the X chromosome N4 (99 aa).

The span at Met1–Glu10 shows a compositional bias: polar residues. Residues Met1 to Asn99 form a disordered region. The span at Asn11–Arg22 shows a compositional bias: basic and acidic residues. Basic residues predominate over residues Lys23–His32. Residues Ser64–Asp78 are compositionally biased toward polar residues.

The protein belongs to the SPAN-X family.

This chain is Sperm protein associated with the nucleus on the X chromosome N4 (SPANXN4), found in Homo sapiens (Human).